The chain runs to 100 residues: Large ribosomal subunit protein uL23 (100 aa).

The protein belongs to the universal ribosomal protein uL23 family. Part of the 50S ribosomal subunit. Contacts protein L29, and trigger factor when it is bound to the ribosome.

Functionally, one of the early assembly proteins it binds 23S rRNA. One of the proteins that surrounds the polypeptide exit tunnel on the outside of the ribosome. Forms the main docking site for trigger factor binding to the ribosome. In Mycobacterium sp. (strain JLS), this protein is Large ribosomal subunit protein uL23.